A 545-amino-acid chain; its full sequence is E3 ubiquitin-protein ligase ipaH9.8 (545 aa).

The segment at 1 to 242 (MLPINNNFSL…YHGPRIYFSM (242 aa)) is interaction with target proteins. LRR repeat units lie at residues 57-77 (NSDE…NLPA), 78-99 (QITL…PVTL), 100-117 (KKLY…VLPP), 118-139 (ALES…PDSL), 140-157 (LTMN…SLPQ), 158-179 (ALKN…SEGN), 182-203 (VVRE…ILNL), and 205-228 (NECS…QRLT). The linker stretch occupies residues 243 to 250 (SDGQQNTL). The E3 ubiquitin-protein ligase catalytic domain stretch occupies residues 251 to 545 (HRPLADAVTA…SENGSQLHHS (295 aa)). One can recognise an NEL domain in the interval 253-545 (PLADAVTAWF…SENGSQLHHS (293 aa)). The Glycyl thioester intermediate role is filled by C337.

The protein belongs to the LRR-containing bacterial E3 ligase family. As to quaternary structure, also interacts with human and mouse U2AF1 (U2AF35). Post-translationally, ubiquitinated in the presence of host E1 ubiquitin-activating enzyme, E2 ubiquitin-conjugating enzyme and ubiquitin.

It is found in the secreted. It localises to the host cytoplasm. The protein localises to the host nucleus. It catalyses the reaction S-ubiquitinyl-[E2 ubiquitin-conjugating enzyme]-L-cysteine + [acceptor protein]-L-lysine = [E2 ubiquitin-conjugating enzyme]-L-cysteine + N(6)-ubiquitinyl-[acceptor protein]-L-lysine.. Its activity is regulated as follows. Exists in an autoinhibited state in the absence of substrate protein, due to interactions of the leucine-rich repeats with NEL domain. Is activated upon binding to a substrate protein. Its function is as follows. Effector E3 ubiquitin ligase that interferes with host's ubiquitination pathway and modulates the acute inflammatory responses, thus facilitating bacterial colonization within the host cell. Interacts with IKBKG (NEMO) and TNIP1 (ABIN-1), a ubiquitin-binding adapter protein, which results in TNIP1-dependent 'Lys-27'-linked polyubiquitination of IKBKG. Consequently, polyubiquitinated IKBKG undergoes proteasome-dependent degradation, which perturbs NF-kappa-B activation during bacterial infection. Mediates polyubiquitination of host U2AF1, leading to its proteasomal degradation. Catalyzes 'Lys-48'-linked polyubiquitination and subsequent degradation of a subset of host guanylate-binding proteins (GBP1, GBP2, GBP4 and GBP6), thereby suppressing host cell defense. In contrast, host GBP3 and GBP7 are not ubiquitinated by IpaH9.8. Uses UBE2D2 (UBCH5B) as an E2 ubiquitin-conjugating enzyme. This is E3 ubiquitin-protein ligase ipaH9.8 (ipaH9.8) from Shigella dysenteriae serotype 1 (strain Sd197).